Here is a 2173-residue protein sequence, read N- to C-terminus: Mediator of DNA damage checkpoint protein 1 (2173 aa).

Over residues 1–19 (MEDTQAIDWDVEEEEETEQ) the composition is skewed to acidic residues. A disordered region spans residues 1–22 (MEDTQAIDWDVEEEEETEQSSE). Residues 1 to 150 (MEDTQAIDWD…SRGPLTVEET (150 aa)) form an interaction with CHEK2 region. The segment at 2–222 (EDTQAIDWDV…PFAFNLNSDT (221 aa)) is interaction with the MRN complex. Thr4 bears the Phosphothreonine mark. The FHA domain maps to 54–105 (NVVGRMPDCSVALPFPSISKQHAEIEILAWDKAPILRDCGSLNGTQILRPPK). A Phosphoserine modification is found at Ser108. The tract at residues 145 to 570 (LTVEETPRVQ…PAKLLVVSLE (426 aa)) is required for nuclear localization (NLS1). At Thr146 the chain carries Phosphothreonine. 4 positions are modified to phosphoserine: Ser168, Ser176, Ser198, and Ser220. The disordered stretch occupies residues 198-320 (SDEEGHSPVL…PPGRPAEVHL (123 aa)). Residue Thr222 is modified to Phosphothreonine. The segment covering 227–244 (GQQSATEEASSAARRGAT) has biased composition (low complexity). Over residues 259-276 (QLEKDQPSVKERDNDTKV) the composition is skewed to basic and acidic residues. Ser301 is subject to Phosphoserine. A Phosphothreonine modification is found at Thr303. Basic and acidic residues predominate over residues 308–320 (DSRPPGRPAEVHL). Phosphoserine is present on Ser331. Thr333 carries the post-translational modification Phosphothreonine. The disordered stretch occupies residues 359 to 383 (GTRGPGAPGLSHLQESQAGSDTDVE). A phosphoserine mark is found at Ser374 and Ser378. Thr380 carries the post-translational modification Phosphothreonine. Ser396, Ser399, and Ser404 each carry phosphoserine. The residue at position 406 (Thr406) is a Phosphothreonine. At Ser413 the chain carries Phosphoserine. Residues 444–515 (LQRSQTTTGR…SSPGIHLERS (72 aa)) form a disordered region. Phosphothreonine is present on Thr451. Ser455 carries the post-translational modification Phosphoserine. The residue at position 457 (Thr457) is a Phosphothreonine. 6 positions are modified to phosphoserine: Ser487, Ser497, Ser500, Ser506, Ser507, and Ser515. The residue at position 525 (Thr525) is a Phosphothreonine. Ser592 is subject to Phosphoserine. Residue Lys618 forms a Glycyl lysine isopeptide (Lys-Gly) (interchain with G-Cter in SUMO1); alternate linkage. Lys618 is covalently cross-linked (Glycyl lysine isopeptide (Lys-Gly) (interchain with G-Cter in SUMO2); alternate). Ser631 bears the Phosphoserine mark. Disordered regions lie at residues 652-697 (VDTD…EDPD) and 773-1770 (HLEA…TLRS). Residues 673–687 (GREREQHVGRTKDSE) show a composition bias toward basic and acidic residues. Residues 688 to 697 (DNCDDSEDPD) show a composition bias toward acidic residues. A phosphoserine mark is found at Ser782 and Ser795. Lys814 carries the N6-acetyllysine modification. Basic and acidic residues-rich tracts occupy residues 821–846 (ETAERVGPERGPLERETEKLLPERQT), 853–864 (ELTRGIQDREQK), 870–903 (DTQRQESDKNGESASPERDRESLKVEIETSKEIQ), and 916–953 (AFEREVERPVADRECEPAELEEKVPKVILERDAQRGEP). Ser957, Ser1000, Ser1035, Ser1070, and Ser1088 each carry phosphoserine. A compositionally biased stretch (polar residues) spans 957 to 969 (SQDQKGQASSPTS). Residues 1079 to 1090 (TIRKTGQDRSQE) show a composition bias toward basic and acidic residues. Over residues 1105–1115 (PKPKIITRKSS) the composition is skewed to basic residues. Polar residues predominate over residues 1131 to 1156 (PSTSTAQPVTPKPTSQATRSRTNRSS). Residues 1150 to 1694 (SRTNRSSVKT…KNRSSVKTPE (545 aa)) form an interaction with the PRKDC complex region. The segment covering 1157-1169 (VKTPEPVVPTVPE) has biased composition (low complexity). Residue Thr1159 is modified to Phosphothreonine. A compositionally biased stretch (polar residues) spans 1171–1189 (QPSTSTDQPVASEPTSQAT). The residue at position 1200 (Thr1200) is a Phosphothreonine. A Phosphoserine modification is found at Ser1237. Residues Thr1241, Thr1282, and Thr1304 each carry the phosphothreonine modification. Over residues 1280 to 1292 (VKTPEPVVPTVPE) the composition is skewed to low complexity. Residues 1294-1320 (QPSTSTDQPVTSEPTSQATRGRTNRSS) are compositionally biased toward polar residues. A compositionally biased stretch (low complexity) spans 1321 to 1333 (VKTPEPVVPTVPE). Residues 1335–1353 (QPSTSTDQPVASEPTSQAT) are compositionally biased toward polar residues. The span at 1390 to 1402 (TSRTTRSRTNMSS) shows a compositional bias: low complexity. Polar residues-rich tracts occupy residues 1418–1434 (PSTSTEQPVITEPTYQP), 1456–1487 (KLQSSTSTDQPITPEPTSQATRGRTNRSSVKS), 1499–1527 (QPSTSTHQPVTAKHTSQATRGRTNRSSVK), and 1540–1559 (QPSTSTHQPITPEPTSQATR). Phosphoserine is present on residues Ser1483 and Ser1484. Lys1486 carries the N6-acetyllysine modification. A phosphothreonine mark is found at Thr1509 and Thr1550. The segment covering 1567–1578 (VKTPKIVVPTVP) has biased composition (low complexity). Polar residues predominate over residues 1581–1598 (QASTSTDQPVTSEPTSRT). Phosphothreonine is present on residues Thr1617 and Thr1632. The segment covering 1626-1639 (STDQPITPKPTSRA) has biased composition (polar residues). At Ser1648 the chain carries Phosphoserine. A phosphothreonine mark is found at Thr1651 and Thr1673. The segment covering 1664–1680 (PSTSRSQLVTPEPTSRA) has biased composition (polar residues). Ser1688 bears the Phosphoserine mark. 4 positions are modified to phosphothreonine: Thr1692, Thr1714, Thr1748, and Thr1755. Residues 1705–1721 (PTTSTDQPVTPKPTSRA) are compositionally biased toward polar residues. Over residues 1761-1770 (QGSQSKTLRS) the composition is skewed to polar residues. Ser1765 is subject to Phosphoserine. A Phosphothreonine modification is found at Thr1781. Residues 1782–2173 (PEFQSPVTTD…VLSPLEMSST (392 aa)) are required for nuclear localization (NLS2). Phosphoserine is present on residues Ser1786 and Ser1795. Positions 1809-1971 (RATGNPGSLT…NRSLRRTKLN (163 aa)) are disordered. Lys1824 is covalently cross-linked (Glycyl lysine isopeptide (Lys-Gly) (interchain with G-Cter in SUMO2)). The residue at position 1859 (Ser1859) is a Phosphoserine. A Glycyl lysine isopeptide (Lys-Gly) (interchain with G-Cter in SUMO2) cross-link involves residue Lys1874. Thr1884 carries the phosphothreonine modification. Ser1904 is subject to Phosphoserine. The segment covering 1907–1920 (HQKQPQRGEVSQKT) has biased composition (polar residues). Lys1924 is covalently cross-linked (Glycyl lysine isopeptide (Lys-Gly) (interchain with G-Cter in SUMO1); alternate). A Glycyl lysine isopeptide (Lys-Gly) (interchain with G-Cter in SUMO2); alternate cross-link involves residue Lys1924. A compositionally biased stretch (basic and acidic residues) spans 1931–1941 (AEKPGKEEDVM). Phosphothreonine is present on Thr1942. 2 consecutive BRCT domains span residues 1976–2054 (APKV…EYVV) and 2075–2166 (RERR…FVLS). Arg2027 is subject to Omega-N-methylarginine.

Homodimer. Interacts with H2AX, which requires phosphorylation of H2AX on 'Ser-139'. Interacts with the MRN complex, composed of MRE11, RAD50, and NBN. Interacts with CHEK2, which requires ATM-mediated phosphorylation of 'Thr-68' within the FHA domain of CHEK2. Interacts constitutively with the BRCA1-BARD1 complex, SMC1A and TP53BP1. Interacts with ATM and FANCD2, and these interactions are reduced upon DNA damage. Also interacts with the PRKDC complex, composed of XRCC6/KU70, XRCC5/KU80 and PRKDC/XRCC7. This interaction may be required for PRKDC autophosphorylation, which is essential for DNA double strand break (DSB) repair. When phosphorylated by ATM, interacts with RNF8 (via FHA domain). Interacts with CEP164. When phosphorylated, interacts with APTX (via FHA-like domain). Interacts (when phosphorylated) with TOPBP1; promoting TOPBP1 localization to DNA damage sites during mitosis. Interacts (when phosphorylated) with NBN; promoting NBN and MRN complex localization to DNA damage sites. Phosphorylated upon exposure to ionizing radiation (IR), ultraviolet radiation (UV), and hydroxyurea (HU). Phosphorylation in response to IR requires ATM, NBN, and possibly CHEK2. Also phosphorylated during the G2/M phase of the cell cycle and during activation of the mitotic spindle checkpoint. Phosphorylation at Thr-4 by ATM stabilizes and enhances homodimerization via the FHA domain. Phosphorylated at Ser-168 and Ser-198 by CK2 in response to DNA damage during mitosis, promoting interaction with TOPBP1. Phosphorylated by CK2 in response to DNA damage, promoting interaction with NBN and recruitment of the MRN complex to DNA damage sites. Post-translationally, sumoylation at Lys-1924 by PIAS4 following DNA damage promotes ubiquitin-mediated degradation. In terms of processing, ubiquitinated by RNF4, leading to proteasomal degradation; undergoes 'Lys-48'-linked polyubiquitination.

Its subcellular location is the nucleus. The protein localises to the chromosome. In terms of biological role, histone reader protein required for checkpoint-mediated cell cycle arrest in response to DNA damage within both the S phase and G2/M phases of the cell cycle. Specifically recognizes and binds histone H2AX phosphorylated at 'Ser-139', a marker of DNA damage, serving as a scaffold for the recruitment of DNA repair and signal transduction proteins to discrete foci of DNA damage sites. Also required for downstream events subsequent to the recruitment of these proteins. These include phosphorylation and activation of the ATM, CHEK1 and CHEK2 kinases, and stabilization of TP53/p53 and apoptosis. ATM and CHEK2 may also be activated independently by a parallel pathway mediated by TP53BP1. Required for chromosomal stability during mitosis by promoting recruitment of TOPBP1 to DNA double strand breaks (DSBs): TOPBP1 forms filamentous assemblies that bridge MDC1 and tether broken chromosomes during mitosis. Required for the repair of DSBs via homologous recombination by promoting recruitment of NBN component of the MRN complex to DSBs. In Macaca mulatta (Rhesus macaque), this protein is Mediator of DNA damage checkpoint protein 1 (MDC1).